A 696-amino-acid chain; its full sequence is Neurogenic protein big brain (696 aa).

The Cytoplasmic portion of the chain corresponds to 1 to 71 (MADESLHTVP…LEFWRSIISE (71 aa)). At Ser46 the chain carries Phosphoserine. Residue Thr47 is modified to Phosphothreonine. A helical transmembrane segment spans residues 72–93 (CLASFMYVFIVCGAAAGVGVGA). Residues 94-97 (SVSS) lie on the Extracellular side of the membrane. Residues 98-118 (VLLATALASGLAMATLTQCFL) traverse the membrane as a helical segment. The Cytoplasmic segment spans residues 119 to 143 (HISGAHINPAVTLALCVVRSISPIR). The NPA 1 signature appears at 126-128 (NPA). Residues 144-167 (AAMYITAQCGGGIAGAALLYGVTV) traverse the membrane as a helical segment. Over 168–189 (PGYQGNLQAAISHSAALAAWER) the chain is Extracellular. Residues 190-208 (FGVEFILTFLVVLCYFVST) traverse the membrane as a helical segment. Topologically, residues 209–213 (DPMKK) are cytoplasmic. The helical transmembrane segment at 214–234 (FMGNSAASIGCAYSACCFVSM) threads the bilayer. Residues 235–256 (PYLNPARSLGPSFVLNKWDSHW) are Extracellular-facing. The NPA 2 motif lies at 238–240 (NPA). A helical membrane pass occupies residues 257–273 (VYWFGPLVGGMASGLVY). Position 273 is a phosphotyrosine; by Src (Tyr273). Over 274 to 696 (EYIFNSRNRN…HYGMLPLRPN (423 aa)) the chain is Cytoplasmic. Ser300 bears the Phosphoserine mark. Positions 314-345 (NKYQQSQGTYPRGQSNGNGGGQAAGNGQHQAA) are disordered. Position 367 is a phosphotyrosine; by Abl (Tyr367). Tyr384 is subject to Phosphotyrosine; by Src. Ser394 is modified (phosphoserine). Disordered regions lie at residues 436 to 634 (MRTQ…KVSA) and 650 to 696 (TSQG…LRPN). Composition is skewed to low complexity over residues 439 to 451 (QQQQQQQQQQQQQ) and 462 to 472 (QNQNVQNQMQQ). At Tyr478 the chain carries Phosphotyrosine; by Src. Residues 487 to 532 (QQQPIQQQQQQQQQQQLQQQQPNMGVQQQQMQPPPQMMSDPQQQPQ) are compositionally biased toward low complexity. Residues 549–558 (GNHKYDRRDP) are compositionally biased toward basic and acidic residues. Ser576 bears the Phosphoserine mark. Residues 576–587 (SDDSSYGSYHGS) are compositionally biased toward low complexity. Over residues 599–616 (EPSPPPPPMLMYAPPPQP) the composition is skewed to pro residues. A Phosphotyrosine; by Abl modification is found at Tyr610. A compositionally biased stretch (low complexity) spans 659–686 (QQQQQQQQQQQQQQQQQQQQMMMQQQQQ).

This sequence belongs to the MIP/aquaporin (TC 1.A.8) family. Post-translationally, phosphorylated at its C-terminus. In terms of tissue distribution, detected in all tissues with neurogenic abilities, for example the neurogenic ectoderm.

The protein localises to the membrane. Its function is as follows. Essential for proper differentiation of ectoderm. Acts synergistically with neurogenic locus proteins Notch and Delta during the separation of neural and epidermal cell lineages in response to the lateral inhibition signal. Voltage-insensitive monovalent cation channel. Ion transport is blocked by the presence of divalent cations. In Drosophila melanogaster (Fruit fly), this protein is Neurogenic protein big brain (bib).